The primary structure comprises 332 residues: D-lactate dehydrogenase (332 aa).

Residues 155-156 (RI), Asp175, 206-207 (VP), Asn212, 233-235 (FAR), and Asp259 contribute to the NAD(+) site. Arg235 is an active-site residue. The active site involves Glu264. His296 serves as the catalytic Proton donor.

It belongs to the D-isomer specific 2-hydroxyacid dehydrogenase family.

The catalysed reaction is (R)-lactate + NAD(+) = pyruvate + NADH + H(+). The sequence is that of D-lactate dehydrogenase (ldhD) from Lactiplantibacillus plantarum (strain ATCC BAA-793 / NCIMB 8826 / WCFS1) (Lactobacillus plantarum).